The primary structure comprises 96 residues: Large ribosomal subunit protein eL14 (96 aa).

This sequence belongs to the eukaryotic ribosomal protein eL14 family.

This is Large ribosomal subunit protein eL14 from Saccharolobus islandicus (strain M.14.25 / Kamchatka #1) (Sulfolobus islandicus).